Reading from the N-terminus, the 260-residue chain is MTDILNKILATKAQEVAAQKAAVNAEHIRALAAEAAPVRSFIDSIRGKHRLNLPAVIAEIKKASPSKGLIRPDFRPAEIARAYENAGAACLSVLTDEPYFQGSPEYLKQAREAVLLPVLRKDFIIDEYQVYQARAWGADAVLLIAAALEQGQLERFEALAHELGMTVLLELHDETELEKCRNLTTPLRGVNNRNLRTFEVSLDQTLSLLPALEGKTVVTESGITGKADVEFMRARGVHTFLIGETFMRADDIGAEVGKLF.

The protein belongs to the TrpC family.

It catalyses the reaction 1-(2-carboxyphenylamino)-1-deoxy-D-ribulose 5-phosphate + H(+) = (1S,2R)-1-C-(indol-3-yl)glycerol 3-phosphate + CO2 + H2O. It functions in the pathway amino-acid biosynthesis; L-tryptophan biosynthesis; L-tryptophan from chorismate: step 4/5. The chain is Indole-3-glycerol phosphate synthase from Neisseria gonorrhoeae (strain NCCP11945).